The sequence spans 263 residues: Ycf3-interacting protein 1, chloroplastic (263 aa).

The transit peptide at 1–71 directs the protein to the chloroplast; that stretch reads MASNMLQLSL…VNKEEDSATY (71 aa). Residues 238 to 258 form a helical membrane-spanning segment; it reads ALYLVSAFPIIIGISVVLILF.

Belongs to the Y3IP1/CEST family. In terms of assembly, interacts with Ycf3.

It localises to the plastid. The protein localises to the chloroplast thylakoid membrane. Functionally, nuclear genome-encoded factor that participates in photosystem I (PSI) biogenesis. Cooperates with the plastid genome-encoded protein PSI assembly Ycf3 in the assembly of stable PSI units in the thylakoid membrane. This chain is Ycf3-interacting protein 1, chloroplastic, found in Nicotiana tabacum (Common tobacco).